The sequence spans 116 residues: Methionine-R-sulfoxide reductase B1 (116 aa).

In terms of domain architecture, MsrB spans 1–106 (MSFCSFFGGE…FSSSLKFVPK (106 aa)). 4 residues coordinate Zn(2+): C23, C26, C71, and C74. U95 acts as the Nucleophile in catalysis. Residue U95 is a non-standard amino acid, selenocysteine.

Belongs to the MsrB Met sulfoxide reductase family. The cofactor is Zn(2+). Post-translationally, truncated MSRB1/SEPX1 proteins produced by failed UGA/Sec decoding are ubiquitinated by some Cul2-RING E3 ubiquitin-protein ligase complexes (containing either PRAME, PRAMF6, PRAMF9 or FEM1C as substrate-recognition component).

The protein resides in the cytoplasm. It localises to the nucleus. It is found in the cytoskeleton. The enzyme catalyses L-methionyl-[protein] + [thioredoxin]-disulfide + H2O = L-methionyl-(R)-S-oxide-[protein] + [thioredoxin]-dithiol. It catalyses the reaction [thioredoxin]-disulfide + L-methionine + H2O = L-methionine (R)-S-oxide + [thioredoxin]-dithiol. In terms of biological role, methionine-sulfoxide reductase that specifically reduces methionine (R)-sulfoxide back to methionine. While in many cases, methionine oxidation is the result of random oxidation following oxidative stress, methionine oxidation is also a post-translational modification that takes place on specific residue. Acts as a regulator of actin assembly by reducing methionine (R)-sulfoxide mediated by MICALs (MICAL1, MICAL2 or MICAL3) on actin, thereby promoting filament repolymerization. Plays a role in innate immunity by reducing oxidized actin, leading to actin repolymerization in macrophages. In Homo sapiens (Human), this protein is Methionine-R-sulfoxide reductase B1 (MSRB1).